We begin with the raw amino-acid sequence, 507 residues long: MEEFKRYLELDRSQQHDFIYPLIFQEYIYALAHDRGLNGSIFFENSGYDNKSSLLIVKRLITHLITQMYQQNHFLFYTNDFNPNKFLRCNTNLYYQMIFEGFVVVVEIPFYLRLLSFLEGKERVKSHNLRSLHSIFPFLEDKFSHLNSLLDILIPHPVHLEILVQTLRYWVKDPSSLHLLRFFLHEYPNWNSLITPKKSSFSFSKRNQRFLFFLYNFHLCEYESIFIFLRNQSSHLCSISSEIFLERISFYKKKDLEEVFTKDLTAILWVFKDPYMHYCRYRGKSILASKDSCLLMNKWKYYLVNFWECYFYIWSQPRRIHINQLSNNSLDFLGYLLSVRLKPSMVRSQMIENSCIIENASKQFDTLVPITPLFRSLSKAKFCNMLGHPISKPVWAASSDSDIIERFGRIYRNLSHYHSGSLKKISLYRIKYILRLSCARTLARKHKSTVRSFLKRLGVGLLEEFFTEEEQVFYLTFPKASSTSGKLYQRRIWYLDIFCINDPANHE.

Belongs to the intron maturase 2 family. MatK subfamily.

It localises to the plastid. The protein resides in the chloroplast. In terms of biological role, usually encoded in the trnK tRNA gene intron. Probably assists in splicing its own and other chloroplast group II introns. The protein is Maturase K of Lyonia ligustrina (Maleberry).